A 576-amino-acid chain; its full sequence is MPIYDEASVPGTAAGRSTTDVGATAGANPFNIPADEEIFRFREEERARKEQDKLIAQTMRVADKTTFAAQMQATATADARTLLRELRPPKGPKATTTLAASSVGTLDRRKEKENMADFIAKKREIFLLQMSLDTKRAEIKKLEERARQREEALKKSEQMLEEDALRFDAFLKENDEKVQEAIKKAEAEAKAKQDKVLEIKRLNTATAALRSELNKYEEQLEDCRRYKEFLDSITPPEWFEQQAAKLQRRKDALVAEWQSQCEALKQRREAALAAKTAAESDYANARTQQQAERAERAIKESVAALKEIMKEKEPQPPNLDFEMDPEDEEMYFQEPGQLLAVYKQLEESNLFYIQNAQETEEALEELRQKLRDTKTRMDAEAQGLQGQVSTLQASIVAAREKAKRLKDRTLENEGAFTLSMGSSNAPTSSVTGSSGPGGPVNLKELGDKVREVYVRCGFDADASISTLQMLTNIEMKLEEYLNLAEGMTPDYVDGAEKAREKDRRKVARDEKLSTQHREHEARMARALERAAAPVFKKTGKPLMFRSAPPQRKKVVQADDRNDEEAELEAYLAQDMI.

The interval 1-29 (MPIYDEASVPGTAAGRSTTDVGATAGANP) is disordered. Coiled-coil stretches lie at residues 125-226 (IFLL…CRRY), 254-311 (VAEW…IMKE), and 342-408 (YKQL…LKDR). 3 disordered regions span residues 417-439 (TLSMGSSNAPTSSVTGSSGPGGP), 495-519 (AEKAREKDRRKVARDEKLSTQHREH), and 538-563 (TGKPLMFRSAPPQRKKVVQADDRNDE).

This sequence belongs to the CFAP100 family. Interacts with FAP73; form the modifier of inner arm (MIA) complex.

It localises to the cytoplasm. Its subcellular location is the cytoskeleton. The protein localises to the flagellum axoneme. As part of MIA, a complex associated with the outer doublet microtubules of the axoneme, may play a role in ciliary/flagellar motility by regulating the assembly and the activity of axonemal inner dynein arm. The sequence is that of Cilia- and flagella-associated protein 100 from Chlamydomonas reinhardtii (Chlamydomonas smithii).